Here is a 246-residue protein sequence, read N- to C-terminus: tRNA (guanine-N(1)-)-methyltransferase (246 aa).

S-adenosyl-L-methionine is bound by residues Gly113 and 133–138 (IGDYVL).

This sequence belongs to the RNA methyltransferase TrmD family. Homodimer.

Its subcellular location is the cytoplasm. The catalysed reaction is guanosine(37) in tRNA + S-adenosyl-L-methionine = N(1)-methylguanosine(37) in tRNA + S-adenosyl-L-homocysteine + H(+). Its function is as follows. Specifically methylates guanosine-37 in various tRNAs. This chain is tRNA (guanine-N(1)-)-methyltransferase, found in Haemophilus influenzae (strain PittGG).